The sequence spans 357 residues: Actin, macronuclear (357 aa).

The protein belongs to the actin family. Met-1 may be removed after translation.

It localises to the cytoplasm. Its subcellular location is the cytoskeleton. The catalysed reaction is ATP + H2O = ADP + phosphate + H(+). In terms of biological role, actins are highly conserved proteins that are involved in various types of cell motility and are ubiquitously expressed in all eukaryotic cells. This is Actin, macronuclear from Oxytricha fallax.